Here is a 327-residue protein sequence, read N- to C-terminus: Regulatory protein MsrR (327 aa).

Residues 1-18 (MDKETNDNEYRRQSEHRT) are compositionally biased toward basic and acidic residues. Residues 1 to 24 (MDKETNDNEYRRQSEHRTSAPKRK) form a disordered region. Residues 1–31 (MDKETNDNEYRRQSEHRTSAPKRKKKKKIRK) are Cytoplasmic-facing. The helical; Signal-anchor for type II membrane protein transmembrane segment at 32–52 (LPIILLIVVILLIALVVYIVH) threads the bilayer. Residues 53 to 327 (SYNSGVEYAK…QAIKDFLDED (275 aa)) lie on the Extracellular side of the membrane.

It belongs to the LytR/CpsA/Psr (LCP) family.

Its subcellular location is the cell membrane. In terms of biological role, involved in SarA attenuation. Affects resistance to oxacillin and teicoplanin, as well as the synthesis of virulence factors. The polypeptide is Regulatory protein MsrR (msrR) (Staphylococcus aureus (strain Mu50 / ATCC 700699)).